Consider the following 796-residue polypeptide: Peroxisome proliferator-activated receptor gamma coactivator 1-alpha (796 aa).

The residue at position 77 (lysine 77) is an N6-acetyllysine. Residues 98 to 138 (PVDEDGLPSFDALTDGDVTTDNEASPSSMPDGTPPPQEAEE) form a disordered region. Residues 114 to 127 (DVTTDNEASPSSMP) show a composition bias toward polar residues. An LXXLL motif motif is present at residues 142–146 (LKKLL). Lysine 144 is modified (N6-acetyllysine). Residue threonine 176 is modified to Phosphothreonine; by AMPK. Residue lysine 182 is modified to N6-acetyllysine. The disordered stretch occupies residues 211–275 (YLTTNDDPPH…NDPKGSPFEN (65 aa)). Positions 217-235 (DPPHTKPTENRNSSRDKCA) are enriched in basic and acidic residues. The segment covering 242-258 (TQPQSQHAQAKPTTLSL) has biased composition (polar residues). An N6-acetyllysine mark is found at lysine 252, lysine 269, lysine 276, lysine 319, lysine 345, lysine 411, lysine 440, and lysine 449. Residues 288–350 (GTAGLTPPTT…HSTKKGPEQS (63 aa)) are disordered. The interaction with PPARG stretch occupies residues 291-337 (GLTPPTTPPHKANQDNPFKASPKLKPSCKTVVPPPTKRARYSECSGT). Positions 348 to 796 (EQSELYAQLS…LKEAQRSLRR (449 aa)) are mediates interaction with RNF34. Serine 537 carries the post-translational modification Phosphoserine; by AMPK. 2 disordered regions span residues 541–597 (FNSP…SSRS) and 611–669 (HRNS…QKQK). Basic residues predominate over residues 561–576 (QRMRSRSRSFSRHRSC). Low complexity predominate over residues 577 to 597 (SRSPYSRSRSRSPGSRSSSRS). The span at 620–629 (SRSRSPYSRR) shows a compositional bias: basic residues. Positions 630 to 669 (PRYDSYEANEHERLKRDEYRREYEKRESERAKQRERQKQK) are enriched in basic and acidic residues. Positions 675–751 (RVIYVGKIRP…TDFELYFCGR (77 aa)) constitute an RRM domain. 2 positions are modified to N6-acetyllysine: lysine 756 and lysine 777.

As to quaternary structure, homooligomer. Interacts with MYBBP1A; inhibits MYBBP1A transcriptional activation. Interacts with PRDM16, LPIN1 and PML. Interacts (via LXXLL motif) with RORA and RORC (via AF-2 motif); activates RORA and RORC transcriptional activation. Interacts with LRPPRC. Interacts with FOXO1. Interacts with NR5A2. In terms of processing, phosphorylation by AMPK in skeletal muscle increases activation of its own promoter. Phosphorylated by CLK2. Heavily acetylated by KAT2A/GCN5 under conditions of high nutrients, leading to inactivation of PPARGC1A. Deacetylated by SIRT1 in low nutrients/high NAD conditions, leading to its activation. Post-translationally, ubiquitinated. Ubiquitination by RNF34 induces proteasomal degradation.

It localises to the nucleus. It is found in the PML body. In terms of biological role, transcriptional coactivator for steroid receptors and nuclear receptors. Greatly increases the transcriptional activity of PPARG and thyroid hormone receptor on the uncoupling protein promoter. Can regulate key mitochondrial genes that contribute to the program of adaptive thermogenesis. Plays an essential role in metabolic reprogramming in response to dietary availability through coordination of the expression of a wide array of genes involved in glucose and fatty acid metabolism. Acts as a key regulator of gluconeogenesis: stimulates hepatic gluconeogenesis by increasing the expression of gluconeogenic enzymes, and acting together with FOXO1 to promote the fasting gluconeogenic program. Induces the expression of PERM1 in the skeletal muscle in an ESRRA-dependent manner. Also involved in the integration of the circadian rhythms and energy metabolism. Required for oscillatory expression of clock genes, such as BMAL1 and NR1D1, through the coactivation of RORA and RORC, and metabolic genes, such as PDK4 and PEPCK. The sequence is that of Peroxisome proliferator-activated receptor gamma coactivator 1-alpha (Ppargc1a) from Rattus norvegicus (Rat).